We begin with the raw amino-acid sequence, 383 residues long: ATP phosphoribosyltransferase regulatory subunit (383 aa).

Belongs to the class-II aminoacyl-tRNA synthetase family. HisZ subfamily. In terms of assembly, heteromultimer composed of HisG and HisZ subunits.

Its subcellular location is the cytoplasm. It functions in the pathway amino-acid biosynthesis; L-histidine biosynthesis; L-histidine from 5-phospho-alpha-D-ribose 1-diphosphate: step 1/9. Functionally, required for the first step of histidine biosynthesis. May allow the feedback regulation of ATP phosphoribosyltransferase activity by histidine. This Cupriavidus necator (strain ATCC 17699 / DSM 428 / KCTC 22496 / NCIMB 10442 / H16 / Stanier 337) (Ralstonia eutropha) protein is ATP phosphoribosyltransferase regulatory subunit.